Reading from the N-terminus, the 276-residue chain is Omega-amidase NIT2-A (276 aa).

In terms of domain architecture, CN hydrolase spans 4 to 248; it reads FKLSLVQFLV…ETVLSAEIDL (245 aa). Catalysis depends on Glu-43, which acts as the Proton acceptor. The active-site Proton donor is the Lys-112. Catalysis depends on Cys-153, which acts as the Nucleophile.

The protein belongs to the carbon-nitrogen hydrolase superfamily. NIT1/NIT2 family. Homodimer.

Its subcellular location is the cytoplasm. It carries out the reaction 2-oxoglutaramate + H2O = 2-oxoglutarate + NH4(+). The catalysed reaction is 2-oxosuccinamate + H2O = oxaloacetate + NH4(+). Functionally, has omega-amidase activity. The role of omega-amidase is to remove potentially toxic intermediates by converting 2-oxoglutaramate and 2-oxosuccinamate to biologically useful 2-oxoglutarate and oxaloacetate, respectively. The polypeptide is Omega-amidase NIT2-A (nit2a) (Xenopus laevis (African clawed frog)).